The primary structure comprises 291 residues: MEMO1 family protein PH1626 (291 aa).

The protein belongs to the MEMO1 family.

This chain is MEMO1 family protein PH1626, found in Pyrococcus horikoshii (strain ATCC 700860 / DSM 12428 / JCM 9974 / NBRC 100139 / OT-3).